The following is a 144-amino-acid chain: High mobility group B protein 2 (144 aa).

Basic and acidic residues-rich tracts occupy residues 1 to 12 (MKGAKSKTETRS) and 73 to 94 (AGDKWKSLSDSEKAPYVAKAEK). Disordered regions lie at residues 1-42 (MKGA…KRPA), 57-94 (KKENPKNKSVATVGKAAGDKWKSLSDSEKAPYVAKAEK), and 106-144 (YNKKLEEGPKEDEESDKSVSEVNDEDDAEDGSEEEEDDD). Positions 38–107 (PKRPASAFFV…EYEKNIKAYN (70 aa)) form a DNA-binding region, HMG box. The residue at position 125 (serine 125) is a Phosphoserine. The segment covering 127–144 (VNDEDDAEDGSEEEEDDD) has biased composition (acidic residues).

The protein belongs to the HMGB family. In terms of tissue distribution, mostly expressed in cotyledons, hypocotyls, leaves, and flowers (excluding pedicels), also present in roots and stems.

The protein resides in the nucleus. It is found in the cytoplasm. It localises to the cytosol. Functionally, binds preferentially double-stranded DNA. Confers sensitivity to salt and drought stresses. This is High mobility group B protein 2 (HMGB2) from Arabidopsis thaliana (Mouse-ear cress).